The chain runs to 247 residues: Ice-binding protein (247 aa).

The N-terminal stretch at methionine 1–alanine 19 is a signal peptide. Asparagine 219 is a glycosylation site (N-linked (GlcNAc...) asparagine).

The protein belongs to the ice-binding protein family.

Its subcellular location is the secreted. Its function is as follows. Binds ice crystals and most probably inhibits their growth in order to prevent cell damage from extracellular ice. The polypeptide is Ice-binding protein (Flammulina populicola (Enokitake mushroom)).